An 831-amino-acid polypeptide reads, in one-letter code: Translation initiation factor IF-2 (831 aa).

The 171-residue stretch at 329 to 499 folds into the tr-type G domain; sequence TRAPVVTVMG…LLISEMQDLK (171 aa). Residues 338 to 345 are G1; it reads GHVDHGKT. 338–345 provides a ligand contact to GTP; sequence GHVDHGKT. The interval 363–367 is G2; that stretch reads GITQH. Residues 385–388 form a G3 region; it reads DTPG. GTP contacts are provided by residues 385–389 and 439–442; these read DTPGH and NKID. The segment at 439–442 is G4; the sequence is NKID. Residues 475–477 are G5; sequence SAL.

This sequence belongs to the TRAFAC class translation factor GTPase superfamily. Classic translation factor GTPase family. IF-2 subfamily.

It localises to the cytoplasm. In terms of biological role, one of the essential components for the initiation of protein synthesis. Protects formylmethionyl-tRNA from spontaneous hydrolysis and promotes its binding to the 30S ribosomal subunits. Also involved in the hydrolysis of GTP during the formation of the 70S ribosomal complex. The polypeptide is Translation initiation factor IF-2 (infB) (Rickettsia prowazekii (strain Madrid E)).